We begin with the raw amino-acid sequence, 368 residues long: Putative zinc metalloprotease Cj1068 (368 aa).

H36 serves as a coordination point for Zn(2+). E37 is a catalytic residue. A Zn(2+)-binding site is contributed by H40. 3 helical membrane-spanning segments follow: residues 112–134 (IYIL…IIIG), 291–313 (FTLL…LLPI), and 338–360 (TFEY…ATYN). Residues 126–197 (AFFLYIIIGN…LKILINREGK (72 aa)) enclose the PDZ domain.

Belongs to the peptidase M50B family. Zn(2+) serves as cofactor.

It localises to the cell inner membrane. The sequence is that of Putative zinc metalloprotease Cj1068 from Campylobacter jejuni subsp. jejuni serotype O:2 (strain ATCC 700819 / NCTC 11168).